A 267-amino-acid polypeptide reads, in one-letter code: Apolipoprotein A-I (267 aa).

Positions 1–18 (MKAAVLTLAVLFLTGSQA) are cleaved as a signal peptide. 2 tandem repeats follow at residues 68–89 (LKLL…EQLG) and 90–111 (PVTQ…QEMS). Positions 68-267 (LKLLDNWDSV…EEYTKKLNTQ (200 aa)) are 10 X approximate tandem repeats. Met-110 bears the Methionine sulfoxide mark. The 3; half-length repeat unit spans residues 112–122 (KDLEEVKAKVQ). Tandem repeats lie at residues 123-144 (PYLD…QKVE), 145-166 (PLRA…EKLS), 167-188 (PLGE…THLA), 189-210 (PYSD…ENGG), and 211-232 (ARLA…EKAK). A Methionine sulfoxide modification is found at Met-136. The stretch at 233 to 243 (PALEDLRQGLL) is one 9; half-length repeat. Repeat 10 spans residues 244–267 (PVLESFKVSFLSALEEYTKKLNTQ).

This sequence belongs to the apolipoprotein A1/A4/E family. As to quaternary structure, homodimer. Interacts with APOA1BP and CLU. Component of a sperm activating protein complex (SPAP), consisting of APOA1, an immunoglobulin heavy chain, an immunoglobulin light chain and albumin. Interacts with NDRG1. Interacts with SCGB3A2. Interacts with NAXE and YJEFN3. In terms of processing, glycosylated. Post-translationally, palmitoylated. Phosphorylation sites are present in the extracellular medium. Major protein of plasma HDL, also found in chylomicrons.

The protein localises to the secreted. In terms of biological role, participates in the reverse transport of cholesterol from tissues to the liver for excretion by promoting cholesterol efflux from tissues and by acting as a cofactor for the lecithin cholesterol acyltransferase (LCAT). As part of the SPAP complex, activates spermatozoa motility. This is Apolipoprotein A-I (APOA1) from Pan paniscus (Pygmy chimpanzee).